Here is a 611-residue protein sequence, read N- to C-terminus: V-type proton ATPase catalytic subunit A (611 aa).

244-251 (GAFGCGKT) serves as a coordination point for ATP.

The protein belongs to the ATPase alpha/beta chains family. V-ATPase is a heteromultimeric enzyme made up of two complexes: the ATP-hydrolytic V1 complex and the proton translocation V0 complex. The V1 complex consists of three catalytic AB heterodimers that form a heterohexamer, three peripheral stalks each consisting of EG heterodimers, one central rotor including subunits D and F, and the regulatory subunits C and H. The proton translocation complex V0 consists of the proton transport subunit a, a ring of proteolipid subunits c9c'', rotary subunit d and subunit e.

Its subcellular location is the cell membrane. It is found in the vacuole. The protein localises to the vesicle. It carries out the reaction ATP + H2O + 4 H(+)(in) = ADP + phosphate + 5 H(+)(out). ATP hydrolysis occurs at the interface between the nucleotide-binding domains of subunits A and B. ATP hydrolysis triggers a conformational change in the subunits D and F, which induces a shift of subunit d. The c-ring is subsequently rotated and results in a continuous proton translocation across the membrane. In terms of biological role, catalytic subunit of the V1 complex of vacuolar(H+)-ATPase (V-ATPase), a multisubunit enzyme composed of a peripheral complex (V1) that hydrolyzes ATP and a membrane integral complex (V0) that translocates protons. V-ATPase is responsible for acidifying and maintaining the pH of intracellular compartments and in some cell types, is targeted to the plasma membrane, where it is responsible for acidifying the extracellular environment. During the trophozoite stage, involved in the acidification of the extracellular space next to the cell membrane. The protein is V-type proton ATPase catalytic subunit A of Plasmodium falciparum (isolate 3D7).